Here is a 599-residue protein sequence, read N- to C-terminus: Probable acetolactate synthase large subunit (599 aa).

Thiamine diphosphate is bound at residue glutamate 47. Residues arginine 149, 258–279, and 301–320 contribute to the FAD site; these read HGTK…IGCR and DIDP…IVGD. The tract at residues 404 to 484 is thiamine pyrophosphate binding; that stretch reads QNQMWMAHYF…VVICIFDNRT (81 aa). Mg(2+) is bound by residues aspartate 455 and asparagine 482.

This sequence belongs to the TPP enzyme family. As to quaternary structure, dimer of large and small chains. Mg(2+) serves as cofactor. It depends on thiamine diphosphate as a cofactor.

It carries out the reaction 2 pyruvate + H(+) = (2S)-2-acetolactate + CO2. It participates in amino-acid biosynthesis; L-isoleucine biosynthesis; L-isoleucine from 2-oxobutanoate: step 1/4. It functions in the pathway amino-acid biosynthesis; L-valine biosynthesis; L-valine from pyruvate: step 1/4. The sequence is that of Probable acetolactate synthase large subunit (ilvB) from Methanococcus aeolicus.